The sequence spans 614 residues: Jacalin-related lectin 14 (614 aa).

Jacalin-type lectin domains follow at residues 27–169 (VQKM…YFSW), 172–314 (PRKM…YFTT), 317–462 (PTKS…YFSP), and 468–611 (AEKL…HVVP).

It belongs to the jacalin lectin family.

This Arabidopsis thaliana (Mouse-ear cress) protein is Jacalin-related lectin 14 (JAL14).